Here is a 438-residue protein sequence, read N- to C-terminus: UDP-N-acetylmuramate--L-alanine ligase (438 aa).

An ATP-binding site is contributed by 108-114 (GAHGKTS).

Belongs to the MurCDEF family.

The protein resides in the cytoplasm. It carries out the reaction UDP-N-acetyl-alpha-D-muramate + L-alanine + ATP = UDP-N-acetyl-alpha-D-muramoyl-L-alanine + ADP + phosphate + H(+). Its pathway is cell wall biogenesis; peptidoglycan biosynthesis. In terms of biological role, cell wall formation. This is UDP-N-acetylmuramate--L-alanine ligase from Oceanobacillus iheyensis (strain DSM 14371 / CIP 107618 / JCM 11309 / KCTC 3954 / HTE831).